The primary structure comprises 507 residues: Pre-glycoprotein polyprotein GP complex (507 aa).

Glycine 2 is lipidated: N-myristoyl glycine; by host. Over 2–17 the chain is Extracellular; sequence GQVVTFLQSLPEVINE. The helical transmembrane segment at 18 to 33 threads the bilayer; that stretch reads AINIALIAISIICILK. The Cytoplasmic portion of the chain corresponds to 34 to 58; the sequence is GLVNFWKCGVVQLAIFLCLAGRKCD. Zn(2+) is bound at residue cysteine 57. Over 59–445 the chain is Extracellular; the sequence is GLMIDRRHEL…QGKTPIALTD (387 aa). 4 disulfide bridges follow: cysteine 86–cysteine 247, cysteine 292–cysteine 305, cysteine 314–cysteine 323, and cysteine 377–cysteine 398. Residues asparagine 89, asparagine 111, asparagine 179, and asparagine 240 are each glycosylated (N-linked (GlcNAc...) asparagine; by host). Asparagine 378, asparagine 386, asparagine 403, and asparagine 408 each carry an N-linked (GlcNAc...) asparagine; by host glycan. The helical transmembrane segment at 446–466 threads the bilayer; it reads ICFWSLVFFTSTVFLQLVGIP. Over 467 to 507 the chain is Cytoplasmic; that stretch reads THRHLVGEGCPKPHRITSNSLCACGYYKIPKRPTRWVRKGK. Residues histidine 468, histidine 470, cysteine 476, histidine 480, cysteine 488, and cysteine 490 each coordinate Zn(2+).

This sequence belongs to the arenaviridae GPC protein family. As to quaternary structure, interacts with glycoprotein G2. Part of the GP complex (GP-C) together with glycoprotein G1 and glycoprotein G2. The GP-complex interacts with protein Z, which interacts with ribonucleocapsid; these interactions may induce virion budding. Homotrimer; disulfide-linked. In pre-fusion state, G1 homotrimers bind G2 homotrimers via ionic interactions. Part of the GP complex (GP-C) together with glycoprotein G2 and the stable signal peptide. The GP-complex interacts with protein Z, which interacts with ribonucleocapsid; these interactions may induce virion budding. In terms of assembly, homotrimer. Interacts with the stable signal peptide. In pre-fusion state, G2 homotrimers bind G1 homotrimers via ionic interactions. Part of the GP complex (GP-C) together with glycoprotein G1 and the stable signal peptide. Acidification in the endosome triggers rearrangements, which ultimately leads to a 6 helix bundle formed by the two heptad repeat domains (HR1 and HR2) in post-fusion state. The GP-complex interacts with protein Z, which interacts with ribonucleocapsid; these interactions may induce virion budding. Post-translationally, specific enzymatic cleavages in vivo yield mature proteins. GP-C polyprotein is cleaved in the endoplasmic reticulum by the host protease MBTPS1. Only cleaved glycoprotein is incorporated into virions. In terms of processing, the SSP remains stably associated with the GP complex following cleavage by signal peptidase and plays crucial roles in the trafficking of GP through the secretory pathway. Myristoylation is necessary for GP2-mediated fusion activity.

It is found in the virion membrane. Its subcellular location is the host endoplasmic reticulum membrane. The protein resides in the host Golgi apparatus membrane. It localises to the host cell membrane. Functionally, functions as a cleaved signal peptide that is retained as the third component of the GP complex (GP-C). Helps to stabilize the spike complex in its native conformation. The SSP is required for efficient glycoprotein expression, post-translational maturation cleavage of G1 and G2, glycoprotein transport to the cell surface plasma membrane, formation of infectious virus particles, and acid pH-dependent glycoprotein-mediated cell fusion. Its function is as follows. Forms the virion spikes together with glycoprotein G2. The glycoprotein spike trimers are connected to the underlying matrix. Interacts with the host receptor leading to virus endocytosis. Forms the virion spikes together with glycoprotein G1. The glycoprotein spike trimers are connected to the underlying matrix. Class I viral fusion protein that directs fusion of viral and host endosomal membranes, leading to delivery of the nucleocapsid into the cytoplasm. Membrane fusion is mediated by irreversible conformational changes induced by acidification. The protein is Pre-glycoprotein polyprotein GP complex of Allpahuayo mammarenavirus (isolate Rat/Peru/CLHP-2472/1997) (ALLV).